Reading from the N-terminus, the 364-residue chain is Chorismate synthase (364 aa).

Residues 41–60 form a disordered region; sequence MQHDLDRRRPGTSRYTTARR. Positions 48 and 54 each coordinate NADP(+). Residues 125 to 127, 238 to 239, Gly278, 293 to 297, and Arg319 contribute to the FMN site; these read RSS, NA, and KPTSS.

The protein belongs to the chorismate synthase family. In terms of assembly, homotetramer. Requires FMNH2 as cofactor.

It catalyses the reaction 5-O-(1-carboxyvinyl)-3-phosphoshikimate = chorismate + phosphate. It functions in the pathway metabolic intermediate biosynthesis; chorismate biosynthesis; chorismate from D-erythrose 4-phosphate and phosphoenolpyruvate: step 7/7. Catalyzes the anti-1,4-elimination of the C-3 phosphate and the C-6 proR hydrogen from 5-enolpyruvylshikimate-3-phosphate (EPSP) to yield chorismate, which is the branch point compound that serves as the starting substrate for the three terminal pathways of aromatic amino acid biosynthesis. This reaction introduces a second double bond into the aromatic ring system. This chain is Chorismate synthase, found in Shewanella baltica (strain OS185).